Reading from the N-terminus, the 763-residue chain is Transferrin receptor protein 1 (763 aa).

Topologically, residues 1–67 (MMDQARSAFS…KPKRFNGRLC (67 aa)) are cytoplasmic. A mediates interaction with SH3BP4 region spans residues 1 to 67 (MMDQARSAFS…KPKRFNGRLC (67 aa)). A phosphoserine mark is found at Ser-10 and Ser-19. Tyr-20 carries the phosphotyrosine modification. The short motif at 20-23 (YTRF) is the Endocytosis signal element. Phosphothreonine is present on Thr-21. A Phosphoserine modification is found at Ser-24. The Stop-transfer sequence motif lies at 58 to 61 (KPKR). Cys-67 is lipidated: S-palmitoyl cysteine. A helical; Signal-anchor for type II membrane protein transmembrane segment spans residues 68–88 (FAAIALVIFFLIGFMSGYLGY). The Extracellular segment spans residues 89 to 763 (CKRVEQKEEC…GDIWNIDNEF (675 aa)). A glycan (O-linked (GalNAc...) threonine) is linked at Thr-104. Residues 225–315 (SKPTEVSGKL…GTGDPYTPGF (91 aa)) form the PA domain. 2 N-linked (GlcNAc...) asparagine glycosylation sites follow: Asn-253 and Asn-319. A ligand-binding region spans residues 572-763 (RLDTYEALTQ…GDIWNIDNEF (192 aa)). Positions 649-651 (RGD) match the Cell attachment site motif. 2 N-linked (GlcNAc...) asparagine glycosylation sites follow: Asn-725 and Asn-730.

Belongs to the peptidase M28 family. M28B subfamily. In terms of assembly, homodimer; disulfide-linked. Binds one transferrin molecule per subunit. Interacts with SH3BP4. Interacts with STEAP3; facilitates TFRC endocytosis in erythroid precursor cells. Post-translationally, stearoylated by ZDHHC6 which inhibits TFRC-mediated activation of the JNK pathway and promotes mitochondrial fragmentation. Stearoylation does not affect iron uptake. In terms of processing, N- and O-glycosylated, phosphorylated and palmitoylated.

The protein localises to the cell membrane. The protein resides in the melanosome. In terms of biological role, cellular uptake of iron occurs via receptor-mediated endocytosis of ligand-occupied transferrin receptor into specialized endosomes. Endosomal acidification leads to iron release. The apotransferrin-receptor complex is then recycled to the cell surface with a return to neutral pH and the concomitant loss of affinity of apotransferrin for its receptor. Transferrin receptor is necessary for development of erythrocytes and the nervous system. Upon stimulation, positively regulates T and B cell proliferation through iron uptake. Acts as a lipid sensor that regulates mitochondrial fusion by regulating activation of the JNK pathway. When dietary levels of stearate (C18:0) are low, promotes activation of the JNK pathway, resulting in HUWE1-mediated ubiquitination and subsequent degradation of the mitofusin MFN2 and inhibition of mitochondrial fusion. When dietary levels of stearate (C18:0) are high, TFRC stearoylation inhibits activation of the JNK pathway and thus degradation of the mitofusin MFN2. Mediates uptake of NICOL1 into fibroblasts where it may regulate extracellular matrix production. This Mus musculus (Mouse) protein is Transferrin receptor protein 1 (Tfrc).